Here is a 91-residue protein sequence, read N- to C-terminus: UPF0512 protein E (91 aa).

The span at 1 to 25 shows a compositional bias: low complexity; it reads MAIFKSISSISNSTSAMGSSNSTSN. The segment at 1–26 is disordered; sequence MAIFKSISSISNSTSAMGSSNSTSNR.

Belongs to the UPF0512 family.

The chain is UPF0512 protein E from Dictyostelium discoideum (Social amoeba).